Here is a 465-residue protein sequence, read N- to C-terminus: Cysteine--tRNA ligase (465 aa).

Position 27 (Cys-27) interacts with Zn(2+). A 'HIGH' region motif is present at residues 29-39 (PTVYNFFHIGN). Zn(2+) is bound by residues Cys-207, His-232, and Glu-236. Residues 264-268 (KMSKS) carry the 'KMSKS' region motif. ATP is bound at residue Lys-267.

It belongs to the class-I aminoacyl-tRNA synthetase family. As to quaternary structure, monomer. Requires Zn(2+) as cofactor.

The protein localises to the cytoplasm. The catalysed reaction is tRNA(Cys) + L-cysteine + ATP = L-cysteinyl-tRNA(Cys) + AMP + diphosphate. This Clostridium botulinum (strain ATCC 19397 / Type A) protein is Cysteine--tRNA ligase.